We begin with the raw amino-acid sequence, 255 residues long: Hydroxyacylglutathione hydrolase (255 aa).

Residues His56, His58, Asp60, His61, His114, Asp133, and His171 each coordinate Zn(2+).

Belongs to the metallo-beta-lactamase superfamily. Glyoxalase II family. In terms of assembly, monomer. The cofactor is Zn(2+).

It catalyses the reaction an S-(2-hydroxyacyl)glutathione + H2O = a 2-hydroxy carboxylate + glutathione + H(+). It participates in secondary metabolite metabolism; methylglyoxal degradation; (R)-lactate from methylglyoxal: step 2/2. Thiolesterase that catalyzes the hydrolysis of S-D-lactoyl-glutathione to form glutathione and D-lactic acid. In Bradyrhizobium sp. (strain ORS 278), this protein is Hydroxyacylglutathione hydrolase.